Here is a 208-residue protein sequence, read N- to C-terminus: Protein GrpE (208 aa).

The span at 1–25 shows a compositional bias: basic and acidic residues; it reads MVDNKDFNEELKESIQEELDNETKS. Residues 1–38 are disordered; the sequence is MVDNKDFNEELKESIQEELDNETKSENPNIDEEVEEVS. The segment covering 29 to 38 has biased composition (acidic residues); that stretch reads NIDEEVEEVS.

This sequence belongs to the GrpE family. Homodimer.

The protein localises to the cytoplasm. In terms of biological role, participates actively in the response to hyperosmotic and heat shock by preventing the aggregation of stress-denatured proteins, in association with DnaK and GrpE. It is the nucleotide exchange factor for DnaK and may function as a thermosensor. Unfolded proteins bind initially to DnaJ; upon interaction with the DnaJ-bound protein, DnaK hydrolyzes its bound ATP, resulting in the formation of a stable complex. GrpE releases ADP from DnaK; ATP binding to DnaK triggers the release of the substrate protein, thus completing the reaction cycle. Several rounds of ATP-dependent interactions between DnaJ, DnaK and GrpE are required for fully efficient folding. This chain is Protein GrpE, found in Clostridium perfringens (strain SM101 / Type A).